The chain runs to 542 residues: Chaperonin GroEL (542 aa).

Residues 29–32 (TLGP), 86–90 (DGTTT), glycine 413, 477–479 (NAA), and aspartate 493 contribute to the ATP site.

It belongs to the chaperonin (HSP60) family. As to quaternary structure, forms a cylinder of 14 subunits composed of two heptameric rings stacked back-to-back. Interacts with the co-chaperonin GroES.

The protein localises to the cytoplasm. It catalyses the reaction ATP + H2O + a folded polypeptide = ADP + phosphate + an unfolded polypeptide.. Functionally, together with its co-chaperonin GroES, plays an essential role in assisting protein folding. The GroEL-GroES system forms a nano-cage that allows encapsulation of the non-native substrate proteins and provides a physical environment optimized to promote and accelerate protein folding. The protein is Chaperonin GroEL of Beutenbergia cavernae (strain ATCC BAA-8 / DSM 12333 / CCUG 43141 / JCM 11478 / NBRC 16432 / NCIMB 13614 / HKI 0122).